The primary structure comprises 876 residues: Alanine--tRNA ligase (876 aa).

Residues histidine 565, histidine 569, cysteine 667, and histidine 671 each contribute to the Zn(2+) site.

It belongs to the class-II aminoacyl-tRNA synthetase family. It depends on Zn(2+) as a cofactor.

The protein resides in the cytoplasm. It carries out the reaction tRNA(Ala) + L-alanine + ATP = L-alanyl-tRNA(Ala) + AMP + diphosphate. Its function is as follows. Catalyzes the attachment of alanine to tRNA(Ala) in a two-step reaction: alanine is first activated by ATP to form Ala-AMP and then transferred to the acceptor end of tRNA(Ala). Also edits incorrectly charged Ser-tRNA(Ala) and Gly-tRNA(Ala) via its editing domain. The chain is Alanine--tRNA ligase from Staphylococcus aureus (strain MRSA252).